We begin with the raw amino-acid sequence, 177 residues long: Large ribosomal subunit protein uL6 (177 aa).

The protein belongs to the universal ribosomal protein uL6 family. As to quaternary structure, part of the 50S ribosomal subunit.

In terms of biological role, this protein binds to the 23S rRNA, and is important in its secondary structure. It is located near the subunit interface in the base of the L7/L12 stalk, and near the tRNA binding site of the peptidyltransferase center. The chain is Large ribosomal subunit protein uL6 from Hahella chejuensis (strain KCTC 2396).